We begin with the raw amino-acid sequence, 258 residues long: uncharacterized protein (258 aa).

Residues Met1 to Ala23 form the signal peptide. The Cytoplasmic segment spans residues Cys24 to Gly64. Residues Val65–Val85 form a helical membrane-spanning segment. Residues Asp86 to Ser123 lie on the Extracellular side of the membrane. Residue Asn118 is glycosylated (N-linked (GlcNAc...) asparagine). Residues Val124–Thr144 form a helical membrane-spanning segment. At Cys145–Ser230 the chain is on the cytoplasmic side. A helical membrane pass occupies residues Ile231–Val251. Topologically, residues Leu252–Ser258 are extracellular.

The protein resides in the membrane. This is an uncharacterized protein from Saccharomyces cerevisiae (strain ATCC 204508 / S288c) (Baker's yeast).